The following is a 765-amino-acid chain: Complement factor B (765 aa).

An N-terminal signal peptide occupies residues 1–25 (MGSNRCPRLGLVPLILGLLSGGVSM). Sushi domains follow at residues 35-100 (SPCS…ECKA), 101-160 (IRCP…ICDD), and 163-220 (GYCP…SCQD). 6 disulfides stabilise this stretch: cysteine 37-cysteine 76, cysteine 62-cysteine 98, cysteine 103-cysteine 145, cysteine 131-cysteine 158, cysteine 165-cysteine 205, and cysteine 191-cysteine 218. 2 N-linked (GlcNAc...) asparagine glycosylation sites follow: asparagine 122 and asparagine 142. Residues 270–469 (NIYLVLDGSD…NLEDVFFQML (200 aa)) enclose the VWFA domain. Serine 278 and serine 280 together coordinate Mg(2+). A glycan (N-linked (GlcNAc...) asparagine) is linked at asparagine 285. Mg(2+) is bound at residue threonine 353. Asparagine 378 is a glycosylation site (N-linked (GlcNAc...) asparagine). A Peptidase S1 domain is found at 477 to 758 (LCGMVWEHKD…VLPWLKEKLK (282 aa)). Disulfide bonds link cysteine 478/cysteine 596, cysteine 511/cysteine 527, cysteine 599/cysteine 615, cysteine 660/cysteine 686, and cysteine 699/cysteine 729. Catalysis depends on charge relay system residues histidine 526 and aspartate 576. Serine 703 functions as the Charge relay system in the catalytic mechanism.

The protein belongs to the peptidase S1 family. As to quaternary structure, monomer. Interacts with complement C3b; this interaction is dependent on the presence of Mg(2+). In terms of assembly, catalytic component of the C3 convertase of the alternative complement pathway, also named C3bBb, composed of complement factor B Bb and complement C3b. Catalytic component of the C5 convertase of the alternative complement pathway, also named C3bBb3b, composed of complement factor B Bb and additional molecules of complement C3b. Interacts to CFP; this interaction contributes to the stabilization of the active C3-convertase enzyme complex. Requires Mg(2+) as cofactor. The cofactor is Mn(2+). Post-translationally, cleaved by CFD following activation of the alternative complement system, generating Ba and Bb chains. Cleavage and activation takes place when CFB is already associated with complement C3b.

It localises to the secreted. The protein localises to the cell surface. The catalysed reaction is Cleavage of Arg-|-Ser bond in complement component C3 alpha-chain to yield C3a and C3b, and Arg-|-Xaa bond in complement component C5 alpha-chain to yield C5a and C5b.. In terms of biological role, precursor of the catalytic component of the C3 and C5 convertase complexes of the alternative pathway of the complement system, a cascade of proteins that leads to phagocytosis and breakdown of pathogens and signaling that strengthens the adaptive immune system. The alternative complement pathway acts as an amplification loop that enhances other complement pathways (classical, lectin and GZMK) by promoting formation of additional C3 and C5 convertases. CFB is cleaved and activated by CFD to generate Ba and Bb chains; Bb chain constituting the catalytic component of the C3 and C5 convertases. Functionally, serine protease component of the complement C3 and C5 convertase complexes of the alternative complement pathway. Following cleavage and activation by factor D (CFD), forms the C3 convertase together with complement C3b. As part of the C3 convertase, cleaves and activates C3 into C3a anaphylatoxin and C3b opsonin, the next components of the complement pathways. When an additional complement C3b molecule binds to the C3 convertase, forms the C5 convertase, which cleaves and activates C5 into C5a anaphylatoxin and C5b component of the membrane attack complex. Its function is as follows. Involved in proliferation and differentiation of preactivated B-lymphocytes, rapid spreading of peripheral blood monocytes, stimulation of lymphocyte blastogenesis and lysis of erythrocytes. The sequence is that of Complement factor B (CFB) from Sus scrofa (Pig).